The primary structure comprises 414 residues: 2-acylphloroglucinol 4-prenyltransferase (414 aa).

A chloroplast-targeting transit peptide spans 1-86; the sequence is MELSSVSSFS…LKPLSIFSCK (86 aa). 8 helical membrane-spanning segments follow: residues 153–173, 201–221, 229–249, 256–276, 281–301, 336–356, 359–379, and 394–414; these read FSWPLIFRALLGMLAILGSCF, ISVESAWLLTLSPAIIGFILI, LLTSLYCLAILSGTIYSVPPF, ITAFLCILMIHAGLNFSVYYA, LGLAFVWSPSFSFITAFITFM, LLGTGLLLLNYVAAISTAIIW, AFKSNIMLLSHAILAFSLFFQ, and KSFYEFIWILFSAEYVVYLFI.

This sequence belongs to the UbiA prenyltransferase family. As to quaternary structure, component an active demethylxanthohumol (DMX) biosynthetic metabolon in glandular trichomes (lupulin glands) that encompasses a chalcone synthase (CHS) and a membrane-bound prenyltransferase. Interacts with PT2, forming a functional metabolon. Interacts with CHIL2; this interaction promotes catalytic activity. Requires Mg(2+) as cofactor. Expressed in trichomes.

It is found in the plastid. It localises to the chloroplast membrane. The enzyme catalyses 2',4,4',6'-tetrahydroxychalcone + dimethylallyl diphosphate = desmethylxanthohumol + diphosphate. The catalysed reaction is a 2-acylphloroglucinol + dimethylallyl diphosphate = a 2-acyl-4-prenylphloroglucinol + diphosphate. Its pathway is secondary metabolite biosynthesis. Its activity is regulated as follows. Stimulated by CHIL2 but inhibited by CHIL1. Involved in the biosynthesis of prenylated phenolics natural products which contribute to the bitter taste of beer and display broad biological activities. Catalyzes the first prenylation step in the beta-bitter acid pathway. Uses dimethylallyl diphosphate (DMAPP) as the prenyl donor. This is 2-acylphloroglucinol 4-prenyltransferase from Humulus lupulus (European hop).